Consider the following 709-residue polypeptide: Disintegrin and metalloproteinase domain-containing protein 5 (709 aa).

Positions M1 to Y98 are excised as a propeptide. At M1–Q649 the chain is on the extracellular side. The Peptidase M12B domain maps to R141–P334. Cystine bridges form between C247–C329, C289–C314, C291–C296, C406–C426, C585–C597, C591–C603, and C605–C614. One can recognise a Disintegrin domain in the interval R346–N434. In terms of domain architecture, EGF-like; calcium-binding spans D581–E615. A helical membrane pass occupies residues Q650–I670. The Cytoplasmic segment spans residues K671–H709. The disordered stretch occupies residues I690–H709.

In terms of assembly, interacts with TEX101. Detected in testis.

Its subcellular location is the membrane. In terms of biological role, this is a non catalytic metalloprotease-like protein. May play a role in sperm-egg fusion. This chain is Disintegrin and metalloproteinase domain-containing protein 5 (Adam5), found in Rattus norvegicus (Rat).